Consider the following 448-residue polypeptide: Acetate kinase (448 aa).

Asn7 contributes to the Mg(2+) binding site. Lys14 is a binding site for ATP. Residue Arg91 participates in substrate binding. Catalysis depends on Asp148, which acts as the Proton donor/acceptor. Residues 208–212 (HIGNG) and 283–285 (DRR) contribute to the ATP site. Glu388 serves as a coordination point for Mg(2+).

It belongs to the acetokinase family. In terms of assembly, homodimer. Requires Mg(2+) as cofactor. It depends on Mn(2+) as a cofactor.

The protein resides in the cytoplasm. The catalysed reaction is acetate + ATP = acetyl phosphate + ADP. It functions in the pathway metabolic intermediate biosynthesis; acetyl-CoA biosynthesis; acetyl-CoA from acetate: step 1/2. In terms of biological role, catalyzes the formation of acetyl phosphate from acetate and ATP. Can also catalyze the reverse reaction. The polypeptide is Acetate kinase (Treponema pallidum (strain Nichols)).